The chain runs to 245 residues: tRNA pseudouridine synthase A (245 aa).

The Nucleophile role is filled by Asp52. Tyr111 serves as a coordination point for substrate.

This sequence belongs to the tRNA pseudouridine synthase TruA family. As to quaternary structure, homodimer.

The enzyme catalyses uridine(38/39/40) in tRNA = pseudouridine(38/39/40) in tRNA. Functionally, formation of pseudouridine at positions 38, 39 and 40 in the anticodon stem and loop of transfer RNAs. This is tRNA pseudouridine synthase A from Rickettsia peacockii (strain Rustic).